The following is a 783-amino-acid chain: E3 UFM1-protein ligase 1 homolog (783 aa).

Residues 404 to 482 (SNSSANFDAD…AGSSRKSVKP (79 aa)) are disordered. A compositionally biased stretch (basic residues) spans 445–457 (KSTKKHQRGRAAA).

The protein belongs to the UFL1 family.

In terms of biological role, E3 UFM1-protein ligase that mediates ufmylation of target proteins. This chain is E3 UFM1-protein ligase 1 homolog, found in Drosophila mojavensis (Fruit fly).